The chain runs to 129 residues: Capsid protein (129 aa).

The interval E31–I104 is viral RNA-binding.

It belongs to the Leviviricetes capsid protein family. As to quaternary structure, homodimer. The capsid proteins form dimers that assemble by group of 5. Twelve such pentamers are linked together with free dimers. The homodimers binds to the viral RNA via an operator hairpin, but also to many other RNA sequences in the viral genome; this interaction probably shifts the virus from the replicative to the assembly phase and ensures specific encapsidation of the viral genome.

The protein localises to the virion. Its function is as follows. Capsid protein self-assembles to form an icosahedral capsid with a T=3 symmetry, about 26 nm in diameter, and consisting of 89 capsid proteins dimers (178 capsid proteins). Involved in viral genome encapsidation through the interaction between a capsid protein dimer and the multiple packaging signals present in the RNA genome. The capsid also contains 1 copy of the A2 maturation protein. Acts as a translational repressor of viral replicase synthesis late in infection. This latter function is the result of capsid protein interaction with an RNA hairpin which contains the replicase ribosome-binding site. This chain is Capsid protein, found in Escherichia coli (Bacteriophage R17).